The primary structure comprises 572 residues: Proline--tRNA ligase (572 aa).

The protein belongs to the class-II aminoacyl-tRNA synthetase family. ProS type 1 subfamily. In terms of assembly, homodimer.

The protein localises to the cytoplasm. The catalysed reaction is tRNA(Pro) + L-proline + ATP = L-prolyl-tRNA(Pro) + AMP + diphosphate. Its function is as follows. Catalyzes the attachment of proline to tRNA(Pro) in a two-step reaction: proline is first activated by ATP to form Pro-AMP and then transferred to the acceptor end of tRNA(Pro). As ProRS can inadvertently accommodate and process non-cognate amino acids such as alanine and cysteine, to avoid such errors it has two additional distinct editing activities against alanine. One activity is designated as 'pretransfer' editing and involves the tRNA(Pro)-independent hydrolysis of activated Ala-AMP. The other activity is designated 'posttransfer' editing and involves deacylation of mischarged Ala-tRNA(Pro). The misacylated Cys-tRNA(Pro) is not edited by ProRS. This Serratia proteamaculans (strain 568) protein is Proline--tRNA ligase.